A 237-amino-acid polypeptide reads, in one-letter code: Ribonuclease PH (237 aa).

Residues arginine 86 and 124-126 each bind phosphate; that span reads GTR.

This sequence belongs to the RNase PH family. In terms of assembly, homohexameric ring arranged as a trimer of dimers.

It catalyses the reaction tRNA(n+1) + phosphate = tRNA(n) + a ribonucleoside 5'-diphosphate. In terms of biological role, phosphorolytic 3'-5' exoribonuclease that plays an important role in tRNA 3'-end maturation. Removes nucleotide residues following the 3'-CCA terminus of tRNAs; can also add nucleotides to the ends of RNA molecules by using nucleoside diphosphates as substrates, but this may not be physiologically important. Probably plays a role in initiation of 16S rRNA degradation (leading to ribosome degradation) during starvation. The protein is Ribonuclease PH of Bradyrhizobium diazoefficiens (strain JCM 10833 / BCRC 13528 / IAM 13628 / NBRC 14792 / USDA 110).